Consider the following 501-residue polypeptide: Aldehyde dehydrogenase, cytosolic 1 (501 aa).

Residue 246 to 251 (GSTEVG) coordinates NAD(+). Glu269 (proton acceptor) is an active-site residue. The Nucleophile role is filled by Cys303.

This sequence belongs to the aldehyde dehydrogenase family. In terms of assembly, homotetramer. In terms of tissue distribution, eye specific, with very high expression in the lens.

It localises to the cytoplasm. It carries out the reaction an aldehyde + NAD(+) + H2O = a carboxylate + NADH + 2 H(+). It functions in the pathway alcohol metabolism; ethanol degradation; acetate from ethanol: step 2/2. Its function is as follows. Major component of the eye of elephant shrews, which in contrast to other mammals, possesses both a lens- and a non-lens class-1 aldehyde dehydrogenase 1. This eye-specific form is a structural protein of the lens and, in other part of the eye, serves as the major form of ALDH1. Can convert/oxidize retinaldehyde to retinoic acid. The polypeptide is Aldehyde dehydrogenase, cytosolic 1 (ALDH1) (Macroscelides proboscideus (Short-eared elephant shrew)).